Here is a 290-residue protein sequence, read N- to C-terminus: ATP synthase gamma chain (290 aa).

It belongs to the ATPase gamma chain family. F-type ATPases have 2 components, CF(1) - the catalytic core - and CF(0) - the membrane proton channel. CF(1) has five subunits: alpha(3), beta(3), gamma(1), delta(1), epsilon(1). CF(0) has three main subunits: a, b and c.

It is found in the cell inner membrane. In terms of biological role, produces ATP from ADP in the presence of a proton gradient across the membrane. The gamma chain is believed to be important in regulating ATPase activity and the flow of protons through the CF(0) complex. The sequence is that of ATP synthase gamma chain from Chelativorans sp. (strain BNC1).